Reading from the N-terminus, the 859-residue chain is Ubiquitin carboxyl-terminal hydrolase 23 (859 aa).

Polar residues predominate over residues 1–24 (MEVATSSTEITIQTDRDPSSNNNG). The interval 1 to 26 (MEVATSSTEITIQTDRDPSSNNNGSC) is disordered. The USP domain occupies 107–410 (AGLQNLGNTC…KAYMLFYVRD (304 aa)). The active-site Nucleophile is the Cys-116. His-369 functions as the Proton acceptor in the catalytic mechanism. Disordered regions lie at residues 722–749 (MISS…ASQN) and 822–859 (EESY…AYRI).

It belongs to the peptidase C19 family.

The enzyme catalyses Thiol-dependent hydrolysis of ester, thioester, amide, peptide and isopeptide bonds formed by the C-terminal Gly of ubiquitin (a 76-residue protein attached to proteins as an intracellular targeting signal).. Recognizes and hydrolyzes the peptide bond at the C-terminal Gly of ubiquitin. Involved in the processing of poly-ubiquitin precursors as well as that of ubiquitinated proteins. This is Ubiquitin carboxyl-terminal hydrolase 23 (UBP23) from Arabidopsis thaliana (Mouse-ear cress).